Consider the following 178-residue polypeptide: Caveolin-1 (178 aa).

The residue at position 2 (Ser2) is an N-acetylserine. Position 2 is a phosphoserine (Ser2). The tract at residues 2-94 (SGGKYVDSEG…WKASFTTFTV (93 aa)) is required for homooligomerization. Residues 2–104 (SGGKYVDSEG…TKYWFYRLLS (103 aa)) are Cytoplasmic-facing. Position 5 is an N6-acetyllysine; alternate (Lys5). A Glycyl lysine isopeptide (Lys-Gly) (interchain with G-Cter in ubiquitin); alternate cross-link involves residue Lys5. Position 6 is a phosphotyrosine (Tyr6). Ser9 carries the post-translational modification Phosphoserine. Residue Tyr14 is modified to Phosphotyrosine; by ABL1. Tyr25 is subject to Phosphotyrosine. Glycyl lysine isopeptide (Lys-Gly) (interchain with G-Cter in ubiquitin) cross-links involve residues Lys26, Lys30, Lys39, Lys47, and Lys57. The tract at residues 82-94 (DGIWKASFTTFTV) is interaction with CAVIN3. The helical intramembrane region spans 105 to 125 (ALFGIPMALIWGIYFAILSFL). Topologically, residues 126–178 (HIWAVVPCIKSFLIEIQCISRVYSIYVHTFCDPFFEAVGKIFSNIRINMQKEI) are cytoplasmic. Residues 131-142 (VPCIKSFLIEIQ) are interacts with SPRY1, SPRY2, SPRY3 and SPRY4. Residues Cys133, Cys143, and Cys156 are each lipidated (S-palmitoyl cysteine). The interval 149–160 (SIYVHTFCDPFF) is interacts with SPRY1, SPRY2, and SPRY4. Residues 167 to 178 (FSNIRINMQKEI) form an interacts with SPRY1, SPRY2, SPRY3 and SPRY4 region.

Belongs to the caveolin family. As to quaternary structure, homooligomer. Interacts with GLIPR2. Interacts with NOSTRIN. Interacts with SNAP25 and STX1A. Interacts (via the N-terminus) with DPP4; the interaction is direct. Interacts with CTNNB1, CDH1 and JUP. Interacts with PACSIN2; this interaction induces membrane tubulation. Interacts with SLC7A9. Interacts with BMX and BTK. Interacts with TGFBR1. Interacts with CAVIN3 (via leucine-zipper domain) in a cholesterol-sensitive manner. Interacts with CAVIN1. Interacts with EHD2 in a cholesterol-dependent manner. Forms a ternary complex with UBXN6 and VCP; mediates CAV1 targeting to lysosomes for degradation. Interacts with ABCG1; this interaction regulates ABCG1-mediated cholesterol efflux. Interacts with NEU3; this interaction enhances NEU3 sialidase activity within caveola. Interacts (via C-terminus) with SPRY1, SPRY2 (via C-terminus), SPRY3, and SPRY4. Interacts with IGFBP5; this interaction allows trafficking of IGFBP5 from the plasma membrane to the nucleus. In terms of processing, phosphorylated at Tyr-14 by ABL1 in response to oxidative stress. Post-translationally, ubiquitinated. Undergo monoubiquitination and multi- and/or polyubiquitination. Monoubiquitination of N-terminal lysines promotes integration in a ternary complex with UBXN6 and VCP which promotes oligomeric CAV1 targeting to lysosomes for degradation. Ubiquitinated by ZNRF1; leading to degradation and modulation of the TLR4-mediated immune response.

The protein localises to the golgi apparatus membrane. It is found in the cell membrane. It localises to the membrane. The protein resides in the caveola. Its subcellular location is the membrane raft. In terms of biological role, may act as a scaffolding protein within caveolar membranes. Forms a stable heterooligomeric complex with CAV2 that targets to lipid rafts and drives caveolae formation. Mediates the recruitment of CAVIN proteins (CAVIN1/2/3/4) to the caveolae. Interacts directly with G-protein alpha subunits and can functionally regulate their activity. Involved in the costimulatory signal essential for T-cell receptor (TCR)-mediated T-cell activation. Its binding to DPP4 induces T-cell proliferation and NF-kappa-B activation in a T-cell receptor/CD3-dependent manner. Recruits CTNNB1 to caveolar membranes and may regulate CTNNB1-mediated signaling through the Wnt pathway. Negatively regulates TGFB1-mediated activation of SMAD2/3 by mediating the internalization of TGFBR1 from membrane rafts leading to its subsequent degradation. Binds 20(S)-hydroxycholesterol (20(S)-OHC). The chain is Caveolin-1 (CAV1) from Felis catus (Cat).